We begin with the raw amino-acid sequence, 464 residues long: PH domain-containing rcdII (464 aa).

The stretch at 8–210 (KSSKEIIEDL…NTKLMSNLEI (203 aa)) forms a coiled coil. Disordered regions lie at residues 215–290 (NFNN…NSSG) and 317–347 (CNNN…SNSN). Composition is skewed to low complexity over residues 234–288 (STTT…SSNS), 317–328 (CNNNNNNNNGNS), and 338–347 (RSRSSSSNSN). In terms of domain architecture, PH spans 353–461 (KIVKEGWLKR…WKDTISSLMP (109 aa)).

The protein is PH domain-containing rcdII (rcdII) of Dictyostelium discoideum (Social amoeba).